We begin with the raw amino-acid sequence, 138 residues long: MNKFEVEILSPEGIVFKGATPSVSFPTTRGIITVLSGHINLITKLNSGEIIIEATDGTKKIIVSGGFIEIVNNNVNVVAEFAAHSDEISRQKIKQAIDHAKDMKNKRKEFVNMYAIESQLKKSAVDLKSGLEIKRKKI.

This sequence belongs to the ATPase epsilon chain family. In terms of assembly, F-type ATPases have 2 components, CF(1) - the catalytic core - and CF(0) - the membrane proton channel. CF(1) has five subunits: alpha(3), beta(3), gamma(1), delta(1), epsilon(1). CF(0) has three main subunits: a, b and c.

It localises to the cell inner membrane. Its function is as follows. Produces ATP from ADP in the presence of a proton gradient across the membrane. The sequence is that of ATP synthase epsilon chain from Endomicrobium trichonymphae.